Here is a 226-residue protein sequence, read N- to C-terminus: Large ribosomal subunit protein uL4 (226 aa).

Positions 47-74 (GTAKAKTRSEVSGGGRKPWPQKHTGRAR) are disordered.

It belongs to the universal ribosomal protein uL4 family. Part of the 50S ribosomal subunit.

Its function is as follows. One of the primary rRNA binding proteins, this protein initially binds near the 5'-end of the 23S rRNA. It is important during the early stages of 50S assembly. It makes multiple contacts with different domains of the 23S rRNA in the assembled 50S subunit and ribosome. In terms of biological role, forms part of the polypeptide exit tunnel. The sequence is that of Large ribosomal subunit protein uL4 from Kosmotoga olearia (strain ATCC BAA-1733 / DSM 21960 / TBF 19.5.1).